The chain runs to 391 residues: Isocitrate dehydrogenase [NADP] (391 aa).

D-threo-isocitrate is bound by residues serine 102, asparagine 104, arginine 108, arginine 118, and arginine 142. Aspartate 283 serves as a coordination point for Mg(2+).

The protein belongs to the isocitrate and isopropylmalate dehydrogenases family. Homodimer. Mg(2+) is required as a cofactor. Requires Mn(2+) as cofactor.

The catalysed reaction is D-threo-isocitrate + NADP(+) = 2-oxoglutarate + CO2 + NADPH. Functionally, catalyzes the oxidative decarboxylation of isocitrate to 2-oxoglutarate and carbon dioxide with the concomitant reduction of NADP(+). This chain is Isocitrate dehydrogenase [NADP] (icd), found in Streptococcus salivarius.